The sequence spans 206 residues: Large ribosomal subunit protein uL4 (206 aa).

The protein belongs to the universal ribosomal protein uL4 family. Part of the 50S ribosomal subunit.

In terms of biological role, one of the primary rRNA binding proteins, this protein initially binds near the 5'-end of the 23S rRNA. It is important during the early stages of 50S assembly. It makes multiple contacts with different domains of the 23S rRNA in the assembled 50S subunit and ribosome. Its function is as follows. Forms part of the polypeptide exit tunnel. This Nitratidesulfovibrio vulgaris (strain ATCC 29579 / DSM 644 / CCUG 34227 / NCIMB 8303 / VKM B-1760 / Hildenborough) (Desulfovibrio vulgaris) protein is Large ribosomal subunit protein uL4.